The sequence spans 414 residues: MSNKTKLKDNKELLYQVVLSYKVSHNYPLKAFLIECKNKLNECIDMIWNNIKYTKKDNPKLPKSNEFKRELRNKLLENWNYASHYIDGIIKTSYSILQSWASNYKRGYRTKTKPIAKRLFVRVKTTLIKYDKEKGEIRITIKPRKDYLILNIKNEWFFDKVKNLTIGEIILKEKETFLTFKDNLNYSDKGMIVGVDSNLRSLDLFHPIEGWTRVDLTELHRIKEVYDRKIDFLKKLLKKFPLRAMRKINRLFERRRNRVKDFLHKLTIQLSRLFPDAIFVFEDLNKRRMYKSKYFNRKIDRVNWNGLIEKISYKTIVILVNPAYTSTICPICGSRMESQEGQVVYCSNCLNSFNRQLVGCYNIFKRGLGNIKEIMGGSGVTTTGVEVSFGKLMTPNPNVIYIVDYNGKYFNEIA.

Residues Cys329, Cys332, Cys346, and Cys349 each coordinate Zn(2+).

This sequence in the N-terminal section; belongs to the transposase 2 family. In the C-terminal section; belongs to the transposase 35 family.

The sequence is that of TnpB-like protein MJ1635 from Methanocaldococcus jannaschii (strain ATCC 43067 / DSM 2661 / JAL-1 / JCM 10045 / NBRC 100440) (Methanococcus jannaschii).